A 285-amino-acid chain; its full sequence is Urease accessory protein UreD (285 aa).

The protein belongs to the UreD family. As to quaternary structure, ureD, UreF and UreG form a complex that acts as a GTP-hydrolysis-dependent molecular chaperone, activating the urease apoprotein by helping to assemble the nickel containing metallocenter of UreC. The UreE protein probably delivers the nickel.

It localises to the cytoplasm. In terms of biological role, required for maturation of urease via the functional incorporation of the urease nickel metallocenter. The sequence is that of Urease accessory protein UreD from Methylobacillus flagellatus (strain ATCC 51484 / DSM 6875 / VKM B-1610 / KT).